Consider the following 436-residue polypeptide: GTPase Der (436 aa).

EngA-type G domains are found at residues 4–167 and 176–351; these read PVIA…PKIE and IRFS…ESHS. Residues 10–17, 57–61, 119–122, 182–189, 229–233, and 294–297 each bind GTP; these read GRPNVGKS, DTGGI, NKVD, DTAGM, and NKWD. The KH-like domain maps to 352-436; the sequence is IRIQTNVLND…PIHIIARARD (85 aa).

Belongs to the TRAFAC class TrmE-Era-EngA-EngB-Septin-like GTPase superfamily. EngA (Der) GTPase family. As to quaternary structure, associates with the 50S ribosomal subunit.

Functionally, GTPase that plays an essential role in the late steps of ribosome biogenesis. The protein is GTPase Der of Bacillus anthracis (strain A0248).